Consider the following 221-residue polypeptide: NAD(P)H-hydrate epimerase (221 aa).

The region spanning 10–210 (MQQIDNYTIE…DVGMLIPDDF (201 aa)) is the YjeF N-terminal domain. 58–62 (NNGAD) provides a ligand contact to (6S)-NADPHX. The K(+) site is built by Asn59 and Asp120. Residues 124 to 130 (GVGLNNV) and Asp153 contribute to the (6S)-NADPHX site. Thr156 lines the K(+) pocket.

It belongs to the NnrE/AIBP family. K(+) serves as cofactor.

It catalyses the reaction (6R)-NADHX = (6S)-NADHX. The enzyme catalyses (6R)-NADPHX = (6S)-NADPHX. Its function is as follows. Catalyzes the epimerization of the S- and R-forms of NAD(P)HX, a damaged form of NAD(P)H that is a result of enzymatic or heat-dependent hydration. This is a prerequisite for the S-specific NAD(P)H-hydrate dehydratase to allow the repair of both epimers of NAD(P)HX. The chain is NAD(P)H-hydrate epimerase from Leuconostoc mesenteroides subsp. mesenteroides (strain ATCC 8293 / DSM 20343 / BCRC 11652 / CCM 1803 / JCM 6124 / NCDO 523 / NBRC 100496 / NCIMB 8023 / NCTC 12954 / NRRL B-1118 / 37Y).